The sequence spans 105 residues: Large ribosomal subunit protein uL24 (105 aa).

It belongs to the universal ribosomal protein uL24 family. In terms of assembly, part of the 50S ribosomal subunit.

In terms of biological role, one of two assembly initiator proteins, it binds directly to the 5'-end of the 23S rRNA, where it nucleates assembly of the 50S subunit. One of the proteins that surrounds the polypeptide exit tunnel on the outside of the subunit. The chain is Large ribosomal subunit protein uL24 from Staphylococcus carnosus (strain TM300).